A 342-amino-acid chain; its full sequence is Methionyl-tRNA formyltransferase (342 aa).

Position 108-111 (108-111 (SLLP)) interacts with (6S)-5,6,7,8-tetrahydrofolate.

It belongs to the Fmt family.

The catalysed reaction is L-methionyl-tRNA(fMet) + (6R)-10-formyltetrahydrofolate = N-formyl-L-methionyl-tRNA(fMet) + (6S)-5,6,7,8-tetrahydrofolate + H(+). Attaches a formyl group to the free amino group of methionyl-tRNA(fMet). The formyl group appears to play a dual role in the initiator identity of N-formylmethionyl-tRNA by promoting its recognition by IF2 and preventing the misappropriation of this tRNA by the elongation apparatus. The polypeptide is Methionyl-tRNA formyltransferase (Prochlorococcus marinus (strain MIT 9303)).